We begin with the raw amino-acid sequence, 415 residues long: Serine/threonine transporter SstT (415 aa).

The next 8 helical transmembrane spans lie at 23–43, 47–67, 85–105, 144–164, 181–201, 220–240, 293–313, and 333–353; these read ILIG…AAIA, LGTL…LMLV, ILFL…LFSF, ALLN…GFAL, AVTF…FGLV, LLVL…LLVF, IPLG…VLTL, and VVAS…LLLI.

The protein belongs to the dicarboxylate/amino acid:cation symporter (DAACS) (TC 2.A.23) family.

The protein localises to the cell inner membrane. The catalysed reaction is L-serine(in) + Na(+)(in) = L-serine(out) + Na(+)(out). It carries out the reaction L-threonine(in) + Na(+)(in) = L-threonine(out) + Na(+)(out). In terms of biological role, involved in the import of serine and threonine into the cell, with the concomitant import of sodium (symport system). In Klebsiella pneumoniae subsp. pneumoniae (strain ATCC 700721 / MGH 78578), this protein is Serine/threonine transporter SstT.